Here is a 396-residue protein sequence, read N- to C-terminus: S-adenosylmethionine synthase (396 aa).

An ATP-binding site is contributed by His15. Mg(2+) is bound at residue Asp17. Position 43 (Glu43) interacts with K(+). Residues Glu56 and Gln99 each contribute to the L-methionine site. The segment at 99 to 109 (QSGDIAQGVDT) is flexible loop. ATP contacts are provided by residues 173-175 (DGK), 241-242 (RF), Asp250, 256-257 (RK), Ala273, and Lys277. Residue Asp250 participates in L-methionine binding. Lys281 is a binding site for L-methionine.

This sequence belongs to the AdoMet synthase family. Homotetramer; dimer of dimers. Mg(2+) serves as cofactor. It depends on K(+) as a cofactor.

Its subcellular location is the cytoplasm. It catalyses the reaction L-methionine + ATP + H2O = S-adenosyl-L-methionine + phosphate + diphosphate. It functions in the pathway amino-acid biosynthesis; S-adenosyl-L-methionine biosynthesis; S-adenosyl-L-methionine from L-methionine: step 1/1. Catalyzes the formation of S-adenosylmethionine (AdoMet) from methionine and ATP. The overall synthetic reaction is composed of two sequential steps, AdoMet formation and the subsequent tripolyphosphate hydrolysis which occurs prior to release of AdoMet from the enzyme. This is S-adenosylmethionine synthase from Nocardioides sp. (strain ATCC BAA-499 / JS614).